A 163-amino-acid chain; its full sequence is Nucleotide-binding protein YajQ (163 aa).

It belongs to the YajQ family.

Functionally, nucleotide-binding protein. The chain is Nucleotide-binding protein YajQ from Shigella dysenteriae serotype 1 (strain Sd197).